The following is a 1087-amino-acid chain: Error-prone DNA polymerase 2 (1087 aa).

The tract at residues 1033 to 1064 (DGAFRPPTGRGDEFAHGSPGSADSRGKAPPGV) is disordered.

The protein belongs to the DNA polymerase type-C family. DnaE2 subfamily.

Its subcellular location is the cytoplasm. The enzyme catalyses DNA(n) + a 2'-deoxyribonucleoside 5'-triphosphate = DNA(n+1) + diphosphate. In terms of biological role, DNA polymerase involved in damage-induced mutagenesis and translesion synthesis (TLS). It is not the major replicative DNA polymerase. The protein is Error-prone DNA polymerase 2 of Rhizobium meliloti (strain 1021) (Ensifer meliloti).